Reading from the N-terminus, the 408-residue chain is S-adenosylmethionine synthase (408 aa).

His16 lines the ATP pocket. Asp18 is a binding site for Mg(2+). Glu44 serves as a coordination point for K(+). Residues Glu57 and Gln100 each coordinate L-methionine. The segment at Gln100–Arg110 is flexible loop. Residues Asp177 to Lys179, Asp257, Arg263 to Lys264, Ala280, and Lys284 contribute to the ATP site. Asp257 serves as a coordination point for L-methionine. Residue Lys288 participates in L-methionine binding.

It belongs to the AdoMet synthase family. Homotetramer; dimer of dimers. Requires Mg(2+) as cofactor. K(+) serves as cofactor.

It localises to the cytoplasm. The enzyme catalyses L-methionine + ATP + H2O = S-adenosyl-L-methionine + phosphate + diphosphate. It functions in the pathway amino-acid biosynthesis; S-adenosyl-L-methionine biosynthesis; S-adenosyl-L-methionine from L-methionine: step 1/1. Its function is as follows. Catalyzes the formation of S-adenosylmethionine (AdoMet) from methionine and ATP. The overall synthetic reaction is composed of two sequential steps, AdoMet formation and the subsequent tripolyphosphate hydrolysis which occurs prior to release of AdoMet from the enzyme. The protein is S-adenosylmethionine synthase of Bifidobacterium animalis subsp. lactis (strain AD011).